A 243-amino-acid polypeptide reads, in one-letter code: MKIDILTLFPEMFAPLEHSIVGKARKKGLLEINYHNFRENAEKSRHVDDEPYGGGQGMLLRAQPIFDAYDAIEKKQPRVILLDPAGRTFDQAYAEELAKEEELIFICGHYEGYDERIKMLVTDEISLGDYVLTGGELAAMTMIDATVRLIPEVIGKEASHTDDSFSSGLLEYPQYTRPYEYRGMVVPEVLMSGHHENIRKWRLYESLKKTYLRRPDLLEDYDFTEEETAFLDQIKESLERENL.

Residues Gly-108 and 127 to 132 each bind S-adenosyl-L-methionine; that span reads LGDYVL.

It belongs to the RNA methyltransferase TrmD family. Homodimer.

The protein localises to the cytoplasm. The enzyme catalyses guanosine(37) in tRNA + S-adenosyl-L-methionine = N(1)-methylguanosine(37) in tRNA + S-adenosyl-L-homocysteine + H(+). Functionally, specifically methylates guanosine-37 in various tRNAs. The polypeptide is tRNA (guanine-N(1)-)-methyltransferase (Streptococcus gordonii (strain Challis / ATCC 35105 / BCRC 15272 / CH1 / DL1 / V288)).